A 341-amino-acid polypeptide reads, in one-letter code: MLSLSKNWNALIKTDKVSYESFPETNNKSKIIVEPLERGFGLTLGNAMRRVLLSSLQGAAVTSIKIPGIEHEFSSIPGVKEDISEIILNVKGIEIKMHVAEKRVIRLKATGPGAITAGMIEAGHDVEILNPDHVICNLAKNKQFEMELTCKVGKGYTLSTNNNEDNNLPIGEIAIDALFNPVKSVTYKVENTRIGQVTDYDKLIMFVETNGDILPEMAVGLAARILQEQLQLFISFEEQEEDKQVKTDALPFSPYLLKRVDELELSVRSANCLKNDNIIYIGDLVKRTEADMLRTPNFGRKSLNEIKEILAKFSLRFGMDVPDWPPENIHELSKRYEDSYN.

The segment at 1–237 (MLSLSKNWNA…EQLQLFISFE (237 aa)) is alpha N-terminal domain (alpha-NTD). An alpha C-terminal domain (alpha-CTD) region spans residues 247-341 (TDALPFSPYL…LSKRYEDSYN (95 aa)).

It belongs to the RNA polymerase alpha chain family. As to quaternary structure, homodimer. The RNAP catalytic core consists of 2 alpha, 1 beta, 1 beta' and 1 omega subunit. When a sigma factor is associated with the core the holoenzyme is formed, which can initiate transcription.

The enzyme catalyses RNA(n) + a ribonucleoside 5'-triphosphate = RNA(n+1) + diphosphate. In terms of biological role, DNA-dependent RNA polymerase catalyzes the transcription of DNA into RNA using the four ribonucleoside triphosphates as substrates. The protein is DNA-directed RNA polymerase subunit alpha of Rickettsia bellii (strain RML369-C).